Consider the following 335-residue polypeptide: Phosphate acyltransferase (335 aa).

This sequence belongs to the PlsX family. In terms of assembly, homodimer. Probably interacts with PlsY.

It is found in the cytoplasm. The catalysed reaction is a fatty acyl-[ACP] + phosphate = an acyl phosphate + holo-[ACP]. It participates in lipid metabolism; phospholipid metabolism. Functionally, catalyzes the reversible formation of acyl-phosphate (acyl-PO(4)) from acyl-[acyl-carrier-protein] (acyl-ACP). This enzyme utilizes acyl-ACP as fatty acyl donor, but not acyl-CoA. The sequence is that of Phosphate acyltransferase from Streptococcus equi subsp. zooepidemicus (strain H70).